The sequence spans 298 residues: MFKENTIKLGIAPIAWTNDDMPELGAENTFEQCISEMALAGFNGSEVGNKYPRNTVVLKKSLELRNLEIASAWFSTFLTTKPLEETVEEFIKHRDFLHDMGAKVIVVSEQGHSIQGLMDVPLFKNKPVFTEEEWNKLADGLHHLGKLAQEKGLHIVYHHHMGTGVQTTAEIEKLMDITDSALVSLLFDTGHLVFSGEEPLYILKKYLPRIKHVHLKDIRQEVVDIVKENELSFLQAVKNGAFTVPGDGVIEFDEVFTILANSDYQGWFVVEAEQDPALANPFEYALKAREFIREKAGL.

The protein belongs to the IolE/MocC family. Glutathione serves as cofactor. Requires Co(2+) as cofactor. The cofactor is Mn(2+).

The catalysed reaction is scyllo-inosose = 3D-3,5/4-trihydroxycyclohexane-1,2-dione + H2O. It participates in polyol metabolism; myo-inositol degradation into acetyl-CoA; acetyl-CoA from myo-inositol: step 2/7. Its function is as follows. Catalyzes the dehydration of inosose (2-keto-myo-inositol, 2KMI or 2,4,6/3,5-pentahydroxycyclohexanone) to 3D-(3,5/4)-trihydroxycyclohexane-1,2-dione (D-2,3-diketo-4-deoxy-epi-inositol). This chain is Inosose dehydratase, found in Bacillus thuringiensis (strain Al Hakam).